Consider the following 406-residue polypeptide: Zinc finger protein 57 (406 aa).

The KRAB domain maps to 17–88 (VRYEDVAVSF…TCTGVFKGGP (72 aa)). Residues 57–77 (ESKKKPQEPNPNLKDKDDDKS) form a disordered region. The segment at 90 to 113 (FFCLTCGKCFKKNTFLFNHQFPVR) adopts a C2H2-type 1; degenerate zinc-finger fold. C2H2-type zinc fingers lie at residues 140–162 (FFCN…RRAH) and 168–190 (RSCP…LKVH). The disordered stretch occupies residues 194–226 (KPVAGSHVKVHQNKPVASNQKQKGRVPPTTRES). The C2H2-type 4 zinc finger occupies 270–292 (VYCPYCRITFTMRTCLLNHLKIH). Residues 318–337 (YNCPVCDSSFRGKESLLNHL) form a C2H2-type 5; degenerate zinc finger. The tract at residues 372–406 (SRKRRRKRISSDSSETEGPSGSDEVMEVDTDSDLS) is disordered. Residues 395–406 (EVMEVDTDSDLS) show a composition bias toward acidic residues.

The protein belongs to the krueppel C2H2-type zinc-finger protein family. In terms of tissue distribution, expressed in oligodendrocytes and at lower levels in astrocytes.

The protein localises to the nucleus. In terms of biological role, transcription regulator required to maintain maternal and paternal gene imprinting, a process by which gene expression is restricted in a parent of origin-specific manner by epigenetic modification of genomic DNA and chromatin, including DNA methylation. Acts by controlling DNA methylation during the earliest multicellular stages of development at multiple imprinting control regions (ICRs). Acts together with ZNF445. Required for the establishment of maternal methylation imprints at SNRPN locus. Acts as a transcriptional repressor in Schwann cells. Binds to a 5'-TGCCGC-3' consensus sequence and recognizes the methylated CpG within this element. The chain is Zinc finger protein 57 (Zfp57) from Rattus norvegicus (Rat).